Here is a 121-residue protein sequence, read N- to C-terminus: Small ribosomal subunit protein uS13 (121 aa).

A disordered region spans residues 96–121; sequence PVRGQNTKNNARTRKGKAVAIAGKKK. A compositionally biased stretch (basic residues) spans 106–121; the sequence is ARTRKGKAVAIAGKKK.

The protein belongs to the universal ribosomal protein uS13 family. As to quaternary structure, part of the 30S ribosomal subunit. Forms a loose heterodimer with protein S19. Forms two bridges to the 50S subunit in the 70S ribosome.

Functionally, located at the top of the head of the 30S subunit, it contacts several helices of the 16S rRNA. In the 70S ribosome it contacts the 23S rRNA (bridge B1a) and protein L5 of the 50S subunit (bridge B1b), connecting the 2 subunits; these bridges are implicated in subunit movement. Contacts the tRNAs in the A and P-sites. The sequence is that of Small ribosomal subunit protein uS13 from Streptococcus gordonii (strain Challis / ATCC 35105 / BCRC 15272 / CH1 / DL1 / V288).